Consider the following 480-residue polypeptide: Membrane-bound lytic murein transglycosylase F (480 aa).

An N-terminal signal peptide occupies residues 1–15; sequence MNRILLTLLTLTLLA. Residues 16-259 form a non-LT domain region; the sequence is GCQRVAVEET…HLDEKYFAHV (244 aa). The interval 260–480 is LT domain; the sequence is KRFDYVDTRA…EKAITGAQPE (221 aa). Glu304 is a catalytic residue.

It in the N-terminal section; belongs to the bacterial solute-binding protein 3 family. This sequence in the C-terminal section; belongs to the transglycosylase Slt family.

The protein resides in the cell outer membrane. It carries out the reaction Exolytic cleavage of the (1-&gt;4)-beta-glycosidic linkage between N-acetylmuramic acid (MurNAc) and N-acetylglucosamine (GlcNAc) residues in peptidoglycan, from either the reducing or the non-reducing ends of the peptidoglycan chains, with concomitant formation of a 1,6-anhydrobond in the MurNAc residue.. Murein-degrading enzyme that degrades murein glycan strands and insoluble, high-molecular weight murein sacculi, with the concomitant formation of a 1,6-anhydromuramoyl product. Lytic transglycosylases (LTs) play an integral role in the metabolism of the peptidoglycan (PG) sacculus. Their lytic action creates space within the PG sacculus to allow for its expansion as well as for the insertion of various structures such as secretion systems and flagella. The chain is Membrane-bound lytic murein transglycosylase F from Shewanella woodyi (strain ATCC 51908 / MS32).